The following is a 153-amino-acid chain: Xanthine-guanine phosphoribosyltransferase (153 aa).

Residues 37–38 (RG), Arg69, and 88–96 (DDLVDTGGT) each bind 5-phospho-alpha-D-ribose 1-diphosphate. Arg69 is a GMP binding site. Mg(2+) is bound at residue Asp89. Guanine is bound by residues Asp92 and Ile135. Xanthine is bound by residues Asp92 and Ile135. Residues 92 to 96 (DTGGT) and 134 to 135 (WI) contribute to the GMP site.

This sequence belongs to the purine/pyrimidine phosphoribosyltransferase family. XGPT subfamily. Homotetramer. Requires Mg(2+) as cofactor.

The protein resides in the cell membrane. It carries out the reaction GMP + diphosphate = guanine + 5-phospho-alpha-D-ribose 1-diphosphate. The enzyme catalyses XMP + diphosphate = xanthine + 5-phospho-alpha-D-ribose 1-diphosphate. The catalysed reaction is IMP + diphosphate = hypoxanthine + 5-phospho-alpha-D-ribose 1-diphosphate. It functions in the pathway purine metabolism; GMP biosynthesis via salvage pathway; GMP from guanine: step 1/1. It participates in purine metabolism; XMP biosynthesis via salvage pathway; XMP from xanthine: step 1/1. Its function is as follows. Purine salvage pathway enzyme that catalyzes the transfer of the ribosyl-5-phosphate group from 5-phospho-alpha-D-ribose 1-diphosphate (PRPP) to the N9 position of the 6-oxopurines guanine and xanthine to form the corresponding ribonucleotides GMP (guanosine 5'-monophosphate) and XMP (xanthosine 5'-monophosphate), with the release of PPi. To a lesser extent, also acts on hypoxanthine. This Buchnera aphidicola subsp. Baizongia pistaciae (strain Bp) protein is Xanthine-guanine phosphoribosyltransferase.